The sequence spans 227 residues: Response regulator protein TodT (227 aa).

The Response regulatory domain occupies 28 to 142 (VIYILDDDNA…ELLGAIRAAL (115 aa)). Asp-77 is subject to 4-aspartylphosphate. Residues 158–223 (LKENYESLSK…DLVRVTERLK (66 aa)) form the HTH luxR-type domain. A DNA-binding region (H-T-H motif) is located at residues 182 to 201 (NKQTALELDISEATVKVHRH).

Phosphorylated by TodS.

It localises to the cytoplasm. Member of the two-component regulatory system TodS/TodT involved in the regulation of toluene degradation. Phosphorylated TodT activates transcription of the tod operon (todXFC1C2BADEGIH). Binds specifically to a 6-bp palindromic DNA structure in the tod promoter region. This chain is Response regulator protein TodT (todT), found in Pseudomonas putida (strain ATCC 700007 / DSM 6899 / JCM 31910 / BCRC 17059 / LMG 24140 / F1).